We begin with the raw amino-acid sequence, 600 residues long: MASQLIENKLKLLPEKAGCYLMKDVNGKVIYVGKSKNLKNRVRSYFKSSQEGRRAELVKNIADYDIIVVDSDKEAFLLEVTLIKKYQPYYNVALKSGTGYPYIEITNEKNPQTRLTSIVYKDKGYYFGPYPNVYAASATLKFIQKVFPLRRCSGYTGRPCLYYHMGQCLGSCFKEVPQSEYDEQIKKIKRFLNGDIQEVKKDLTNKMLQASADLEFERAGELRDQLKYIEETVEKQKIISNDHTQRDIFNYYVDRSWISIQVFFLRQAKLLRRESHMFPLTDETDPEDEFMSFIAQFYAQKNRVNPREVLVPKGIDQDELAAAIGIKVRTPQRGQKASLMEMARENAQLKLDDKFRLLELGQRKTKGAQEEIFKALGLPYGSYIESFDHSHIQGADPVSALVVFKDGEPFKTGYRKFKLKGEVEHQNSADEVGNTREVVRRRYSRLLKEHERMPDLILMDGGQIQVEACEDVLRNELNLDIPVAGMVKDDKHRTNHLLYGDPFKGQPFKLIPMDPKSEGFYLMTRIQDEVHRFAITFHRQTHAKNSLVSRLDSIKGIGPKSRTKLLREFGSLKKIKEASIDDLRKAGLTLTQAQAVKISL.

Residues 15-92 enclose the GIY-YIG domain; the sequence is EKAGCYLMKD…IKKYQPYYNV (78 aa). The 36-residue stretch at 197 to 232 folds into the UVR domain; sequence QEVKKDLTNKMLQASADLEFERAGELRDQLKYIEET.

The protein belongs to the UvrC family. Interacts with UvrB in an incision complex.

It localises to the cytoplasm. The UvrABC repair system catalyzes the recognition and processing of DNA lesions. UvrC both incises the 5' and 3' sides of the lesion. The N-terminal half is responsible for the 3' incision and the C-terminal half is responsible for the 5' incision. The sequence is that of UvrABC system protein C from Lactobacillus delbrueckii subsp. bulgaricus (strain ATCC BAA-365 / Lb-18).